The following is a 252-amino-acid chain: 5'-nucleotidase SurE (252 aa).

Asp8, Asp9, Ser42, and Asn94 together coordinate a divalent metal cation.

The protein belongs to the SurE nucleotidase family. A divalent metal cation is required as a cofactor.

Its subcellular location is the cytoplasm. The catalysed reaction is a ribonucleoside 5'-phosphate + H2O = a ribonucleoside + phosphate. Functionally, nucleotidase that shows phosphatase activity on nucleoside 5'-monophosphates. The protein is 5'-nucleotidase SurE of Ehrlichia ruminantium (strain Welgevonden).